Here is a 416-residue protein sequence, read N- to C-terminus: Alpha-1-antiproteinase (416 aa).

Residues 1-24 (MALSITRGLLLLAALCCLAPISLA) form the signal peptide. 4 N-linked (GlcNAc...) asparagine glycosylation sites follow: asparagine 68, asparagine 105, asparagine 143, and asparagine 269. Residues 371 to 390 (GSTFLEAIPMSLPPDVEFNR) form an RCL region. Serine 381 is subject to Phosphoserine.

It belongs to the serpin family. As to quaternary structure, interacts with CELA2A. Interacts with ERGIC3 and LMAN1/ERGIC53. Interacts with PRSS1/Trypsin. Plasma.

The protein localises to the secreted. Its function is as follows. Inhibitor of serine proteases. Its primary target is elastase, but it also has a moderate affinity for plasmin and thrombin. Inhibits trypsin, chymotrypsin and plasminogen activator. The protein is Alpha-1-antiproteinase (SERPINA1) of Bos taurus (Bovine).